Consider the following 506-residue polypeptide: uncharacterized protein (506 aa).

It to R.prowazekii RP789, RP027 and RP028.

This is an uncharacterized protein from Synechocystis sp. (strain ATCC 27184 / PCC 6803 / Kazusa).